The chain runs to 901 residues: Alanine--tRNA ligase (901 aa).

Positions 581, 585, 684, and 688 each coordinate Zn(2+).

This sequence belongs to the class-II aminoacyl-tRNA synthetase family. Zn(2+) is required as a cofactor.

The protein resides in the cytoplasm. The enzyme catalyses tRNA(Ala) + L-alanine + ATP = L-alanyl-tRNA(Ala) + AMP + diphosphate. Catalyzes the attachment of alanine to tRNA(Ala) in a two-step reaction: alanine is first activated by ATP to form Ala-AMP and then transferred to the acceptor end of tRNA(Ala). Also edits incorrectly charged Ser-tRNA(Ala) and Gly-tRNA(Ala) via its editing domain. The chain is Alanine--tRNA ligase from Mycobacterium marinum (strain ATCC BAA-535 / M).